The sequence spans 248 residues: Probable transcriptional regulatory protein Syncc9902_0542 (248 aa).

This sequence belongs to the TACO1 family.

Its subcellular location is the cytoplasm. The protein is Probable transcriptional regulatory protein Syncc9902_0542 of Synechococcus sp. (strain CC9902).